A 529-amino-acid chain; its full sequence is Acid-sensing ion channel 1C (529 aa).

The Cytoplasmic portion of the chain corresponds to 1-51; sequence MTAMKGDSEDSIESMRPSNLQVFANNSTLHGMSHIFAYGHMTFRRFLWTLS. The helical transmembrane segment at 52–68 threads the bilayer; it reads FMGSLGLLMYVCMDRVY. Residues 69-427 are Extracellular-facing; it reads YYFEFPHVTK…EKIEQKKAYE (359 aa). Asn86, Asn155, and Asn161 each carry an N-linked (GlcNAc...) asparagine glycan. 7 disulfides stabilise this stretch: Cys95-Cys196, Cys174-Cys181, Cys292-Cys367, Cys310-Cys363, Cys314-Cys361, Cys323-Cys345, and Cys325-Cys337. Asn185 carries N-linked (GlcNAc...) asparagine glycosylation. Residues Asn368 and Asn395 are each glycosylated (N-linked (GlcNAc...) asparagine). Residues 428-458 traverse the membrane as a discontinuously helical segment; the sequence is VAGLLGDIGGQMGLFIGASVLTILEIFDYLY. The GAS motif; ion selectivity filter motif lies at 444 to 446; the sequence is GAS. The Cytoplasmic segment spans residues 459–529; it reads EVLKDKILGS…PFVVGSNSGK (71 aa).

The protein belongs to the amiloride-sensitive sodium channel (TC 1.A.6) family. ASIC1 subfamily. As to quaternary structure, homotrimer. Heterotrimer; with other ASIC proteins producing channel with different properties. Interacts with asic1a. Expressed in central nervous system.

It is found in the cell membrane. The protein resides in the postsynaptic cell membrane. It localises to the cell projection. The protein localises to the dendrite. The catalysed reaction is Na(+)(in) = Na(+)(out). The enzyme catalyses K(+)(in) = K(+)(out). It catalyses the reaction Li(+)(in) = Li(+)(out). It carries out the reaction Ca(2+)(in) = Ca(2+)(out). Inhibited by the diuretic drug amiloride. Forms voltage-independent, pH-gated trimeric sodium channels that act as postsynaptic excitatory receptors in the nervous system, playing a crucial role in regulating synaptic plasticity, learning, and memory. Upon extracellular pH drop this channel elicits transient, fast activating, and completely desensitizing inward currents. Displays high selectivity for sodium ions but can also permit the permeation of other cations. This is Acid-sensing ion channel 1C from Danio rerio (Zebrafish).